Here is a 446-residue protein sequence, read N- to C-terminus: Chromosomal replication initiator protein DnaA (446 aa).

A domain I, interacts with DnaA modulators region spans residues 1–81 (MENISDLWNS…AKLAIRFIIP (81 aa)). The interval 81-109 (PQSQAEEDIDLPPVKPNPAQDDSAHLPQS) is domain II. The interval 110 to 326 (MLNPKYTFDT…GALIRVVAYS (217 aa)) is domain III, AAA+ region. Residues Gly-154, Gly-156, Lys-157, and Thr-158 each coordinate ATP. The domain IV, binds dsDNA stretch occupies residues 327–446 (SLINKDINAD…QVEEINGILK (120 aa)).

It belongs to the DnaA family. In terms of assembly, oligomerizes as a right-handed, spiral filament on DNA at oriC.

It is found in the cytoplasm. In terms of biological role, plays an essential role in the initiation and regulation of chromosomal replication. ATP-DnaA binds to the origin of replication (oriC) to initiate formation of the DNA replication initiation complex once per cell cycle. Binds the DnaA box (a 9 base pair repeat at the origin) and separates the double-stranded (ds)DNA. Forms a right-handed helical filament on oriC DNA; dsDNA binds to the exterior of the filament while single-stranded (ss)DNA is stabiized in the filament's interior. The ATP-DnaA-oriC complex binds and stabilizes one strand of the AT-rich DNA unwinding element (DUE), permitting loading of DNA polymerase. After initiation quickly degrades to an ADP-DnaA complex that is not apt for DNA replication. Binds acidic phospholipids. The polypeptide is Chromosomal replication initiator protein DnaA (Bacillus cereus (strain B4264)).